We begin with the raw amino-acid sequence, 469 residues long: MSYKSHQLIKDHDVKWVDLRFTDTKGKQQHVTMPARDALDDEFFEAGKMFDGSSIAGWKGIEASDMILMPDDSTAVLDPFTEEPTLILVCDIIEPSTMQGYERDPRNIAKRAEEYLKSTGIGDTVFVGPEPEFFIFDEVKFKSDISGSMFKIFSEQASWNTDADIESGNKGHRPGVKGGYFPVPPVDHDHEIRTAMCNALEEMGLVVEVHHHEVATAGQNEIGVKFNTLVAKADEVQTLKYCVHNVADAYGKTVTFMPKPLYGDNGSGMHVHMSISKDGKNTFAGEGYAGLSETALYFIGGIIKHGKALNGFTNPSTNSYKRLVPGFEAPVMLAYSARNRSASIRIPYVSSPKARRIEARFPDPAANPYLAFAALLMAGLDGIQNKIHPGDAADKNLYDLPPEEAKEIPQVCGSLKEALEELDKGRAFLTKGGVFTDEFIDAYIELKSEEEIKVRTFVHPLEYDLYYSV.

Residues 12 to 97 (HDVKWVDLRF…LVCDIIEPST (86 aa)) enclose the GS beta-grasp domain. Residues 105–469 (PRNIAKRAEE…PLEYDLYYSV (365 aa)) enclose the GS catalytic domain. Positions 130 and 132 each coordinate Mg(2+). Glu-208 contributes to the ATP binding site. Residues Glu-213 and Glu-221 each coordinate Mg(2+). L-glutamate contacts are provided by residues 265–266 (NG) and Gly-266. Residue His-270 coordinates Mg(2+). ATP-binding positions include 272 to 274 (HMS) and Ser-274. 3 residues coordinate L-glutamate: Arg-322, Glu-328, and Arg-340. The ATP site is built by Arg-340, Arg-345, and Lys-353. Glu-358 serves as a coordination point for Mg(2+). Residue Arg-360 participates in L-glutamate binding. Tyr-398 carries the post-translational modification O-AMP-tyrosine.

This sequence belongs to the glutamine synthetase family. As to quaternary structure, oligomer of 12 subunits arranged in the form of two hexameric ring. The cofactor is Mg(2+).

Its subcellular location is the cytoplasm. It catalyses the reaction L-glutamate + NH4(+) + ATP = L-glutamine + ADP + phosphate + H(+). The activity of this enzyme could be controlled by adenylation under conditions of abundant glutamine. Catalyzes the ATP-dependent biosynthesis of glutamine from glutamate and ammonia. The chain is Glutamine synthetase from Pseudomonas aeruginosa (strain ATCC 15692 / DSM 22644 / CIP 104116 / JCM 14847 / LMG 12228 / 1C / PRS 101 / PAO1).